The following is a 294-amino-acid chain: Nucleotide-binding protein Adeh_0147 (294 aa).

Glycine 17–serine 24 contributes to the ATP binding site. Residue aspartate 68–glutamate 71 participates in GTP binding.

It belongs to the RapZ-like family.

Displays ATPase and GTPase activities. The polypeptide is Nucleotide-binding protein Adeh_0147 (Anaeromyxobacter dehalogenans (strain 2CP-C)).